A 754-amino-acid polypeptide reads, in one-letter code: 5-methyltetrahydropteroyltriglutamate--homocysteine methyltransferase (754 aa).

5-methyltetrahydropteroyltri-L-glutamate is bound by residues 15–18 and Lys-114; that span reads RELK. Residues 430–432 and Glu-483 each bind L-homocysteine; that span reads IGS. Residues 430–432 and Glu-483 contribute to the L-methionine site; that span reads IGS. 5-methyltetrahydropteroyltri-L-glutamate is bound by residues 514–515 and Trp-560; that span reads RC. Position 598 (Asp-598) interacts with L-homocysteine. Asp-598 lines the L-methionine pocket. Glu-604 contacts 5-methyltetrahydropteroyltri-L-glutamate. Residues His-641, Cys-643, and Glu-665 each contribute to the Zn(2+) site. His-694 acts as the Proton donor in catalysis. Cys-726 provides a ligand contact to Zn(2+).

It belongs to the vitamin-B12 independent methionine synthase family. Zn(2+) is required as a cofactor.

The catalysed reaction is 5-methyltetrahydropteroyltri-L-glutamate + L-homocysteine = tetrahydropteroyltri-L-glutamate + L-methionine. Its pathway is amino-acid biosynthesis; L-methionine biosynthesis via de novo pathway; L-methionine from L-homocysteine (MetE route): step 1/1. Functionally, catalyzes the transfer of a methyl group from 5-methyltetrahydrofolate to homocysteine resulting in methionine formation. This is 5-methyltetrahydropteroyltriglutamate--homocysteine methyltransferase from Campylobacter jejuni subsp. jejuni serotype O:6 (strain 81116 / NCTC 11828).